Reading from the N-terminus, the 190-residue chain is Potassium-transporting ATPase KdpC subunit (190 aa).

The chain crosses the membrane as a helical span at residues 10 to 30 (TFLFLLLITGGVYPLLTTALG).

The protein belongs to the KdpC family. As to quaternary structure, the system is composed of three essential subunits: KdpA, KdpB and KdpC.

Its subcellular location is the cell inner membrane. Its function is as follows. Part of the high-affinity ATP-driven potassium transport (or Kdp) system, which catalyzes the hydrolysis of ATP coupled with the electrogenic transport of potassium into the cytoplasm. This subunit acts as a catalytic chaperone that increases the ATP-binding affinity of the ATP-hydrolyzing subunit KdpB by the formation of a transient KdpB/KdpC/ATP ternary complex. The chain is Potassium-transporting ATPase KdpC subunit from Escherichia coli (strain SMS-3-5 / SECEC).